Here is a 201-residue protein sequence, read N- to C-terminus: Putative 3-methyladenine DNA glycosylase (201 aa).

Belongs to the DNA glycosylase MPG family.

The polypeptide is Putative 3-methyladenine DNA glycosylase (Clostridium novyi (strain NT)).